A 278-amino-acid polypeptide reads, in one-letter code: Putative phosphoenolpyruvate synthase regulatory protein (278 aa).

157–164 (GVSRSGKT) lines the ADP pocket.

Belongs to the pyruvate, phosphate/water dikinase regulatory protein family. PSRP subfamily.

It carries out the reaction [pyruvate, water dikinase] + ADP = [pyruvate, water dikinase]-phosphate + AMP + H(+). It catalyses the reaction [pyruvate, water dikinase]-phosphate + phosphate + H(+) = [pyruvate, water dikinase] + diphosphate. Functionally, bifunctional serine/threonine kinase and phosphorylase involved in the regulation of the phosphoenolpyruvate synthase (PEPS) by catalyzing its phosphorylation/dephosphorylation. The protein is Putative phosphoenolpyruvate synthase regulatory protein of Vibrio parahaemolyticus serotype O3:K6 (strain RIMD 2210633).